The chain runs to 429 residues: Transcriptional coactivator AacuS (429 aa).

Residues 80–144 form the HTH iclR-type domain; the sequence is MASQTQLLAC…GFLQEPELGH (65 aa). The H-T-H motif DNA-binding region spans 110-129; sequence IKDVAELIGVPENHICRIVR.

It localises to the nucleus. Functionally, transcriptional coactivator; part of the gene cluster that mediates the biosynthesis of the tetrahydroxanthone dimer secalonic acid D. This Aspergillus aculeatus (strain ATCC 16872 / CBS 172.66 / WB 5094) protein is Transcriptional coactivator AacuS.